Consider the following 4456-residue polypeptide: Dynein axonemal heavy chain 2 (4456 aa).

Residues 1 to 12 (MASKAEKKRKVA) are compositionally biased toward basic residues. Positions 1-55 (MASKAEKKRKVAGRGGARAGRVVRAPQSTAGPGATEASLLPDGQEPEPESGKEDS) are disordered. The segment at 1 to 1795 (MASKAEKKRK…RQTNTQFQYG (1795 aa)) is stem. A coiled-coil region spans residues 1218–1274 (LDQIAQMRAMLMAMRDEENNLRSNLGIFKIEQPVSKDLQILEKELDALQQVWEITRD). A TPR 1 repeat occupies 1439–1474 (EDNQVALSTMKASRFVKAFEKDVDHWERCLSLILEV). AAA regions lie at residues 1794–2015 (YGYE…LLRY), 2075–2302 (DTIE…DNCN), 2407–2654 (RYPP…VFQG), and 2751–3003 (EYNL…LRRY). Residues 1832-1839 (GPAGTGKT), 2113-2120 (GGTGSSKT), and 2445-2452 (GPVGTGKT) each bind ATP. One copy of the TPR 2 repeat lies at 2750–2783 (NEYNLSPSVVPMQLVLFREAIEHITRIVRVIGQP). 2791 to 2798 (GIGGSGRQ) contributes to the ATP binding site. A stalk region spans residues 3018-3301 (YKKLLGEKRQ…EELRKKSEEM (284 aa)). Residues 3041 to 3078 (FKIDETREKVEVMSLELEDAKKKVAEFQKQCEEYLVII) adopt a coiled-coil conformation. The TPR 3 repeat unit spans residues 3101–3134 (IEEVKCQALADNAQKDLEEALPALEEAMRALESL). 2 coiled-coil regions span residues 3245-3333 (KRIR…EEDL) and 3552-3596 (VRKE…GSLL). AAA regions lie at residues 3387–3617 (LTNP…EVTE) and 3833–4052 (VTSF…LLSL). 2 TPR repeats span residues 4101 to 4134 (TTPF…LPSM) and 4135 to 4169 (DPPE…QPQI).

Belongs to the dynein heavy chain family. Part of the axonemal inner dynein arm complex that consists of at least two heavy chains and a number of intermediate and light chains. Interacts with DNAI4.

The protein resides in the cytoplasm. It localises to the cytoskeleton. Its subcellular location is the cilium axoneme. The protein localises to the flagellum axoneme. Functionally, as part of the axonemal inner dynein arm complex plays a central role in ciliary beat. Expressed in sperm flagellum, it is required for sperm motility. Dyneins are microtubule-based molecular motors possessing ATPase activities that can convert the chemical energy of ATP into relative sliding between adjacent microtubule doublets to generate ciliary bending. The protein is Dynein axonemal heavy chain 2 of Mus musculus (Mouse).